Here is a 1416-residue protein sequence, read N- to C-terminus: K homology domain-containing protein 4 (1416 aa).

Disordered stretches follow at residues 25 to 76, 108 to 174, 196 to 225, 255 to 320, and 341 to 385; these read NPNG…TSMR, KAEA…TRSS, VNSS…LSQS, QNDE…FPGR, and SSLN…MPKP. 3 stretches are compositionally biased toward low complexity: residues 196–213, 273–285, and 341–350; these read VNSS…SANH, QSSF…LDQL, and SSLNPPASGS. The span at 357–369 shows a compositional bias: polar residues; that stretch reads GLSSAQPLRSPQP. KH domains follow at residues 412 to 504, 508 to 594, 747 to 816, 817 to 892, and 900 to 968; these read FKST…VILD, GLRS…QVSM, FEVR…EELP, AEMS…SVME, and DYIS…DHVP. Disordered regions lie at residues 1215 to 1240 and 1289 to 1416; these read AGVS…SGHR and HASG…FDRA. Residues 1219–1239 are compositionally biased toward polar residues; the sequence is VPTSGGIQFPSQPSLHQQSGH. The span at 1343-1374 shows a compositional bias: low complexity; it reads QQQAQQQLQYQQQQQQQQQQQQQPGYGMPHQP. The span at 1391–1402 shows a compositional bias: polar residues; the sequence is RNTQNPDSTTMD.

Functionally, RNA-binding protein that recognizes the sequence AUACCC via its tandem KH domains 3 and 4, probably in order to promote mRNA instability. Plays an essential role in filamentous growth and virulence. The polypeptide is K homology domain-containing protein 4 (Mycosarcoma maydis (Corn smut fungus)).